Reading from the N-terminus, the 219-residue chain is MVKYFLGQSVLRSSWDQVFAAFWQRYPNPYSKHVLTEDIVHREVTSDQKLLSRRLLTKTNRMPRWAERLFPANVAHSVYILEDSIVDPQNQTMTTFTWNINHARLMVVEERCVYRVNSDNSGWTEIRREAWVSSSLFGVSRAVQEFGLARFKSNVTKTMKGFEYILAKLQGEAPPKTLVETAKEAKEKAKETALAATEKAKDLASKAATKKQQQQQQFV.

One can recognise a PRELI/MSF1 domain in the interval 36–174 (TEDIVHREVT…ILAKLQGEAP (139 aa)).

In terms of assembly, forms a complex with TRIAP1 in the mitochondrion intermembrane space. Interacts with OPA1 and AIFM1.

Its subcellular location is the mitochondrion. The protein resides in the mitochondrion intermembrane space. The enzyme catalyses a 1,2-diacyl-sn-glycero-3-phosphate(in) = a 1,2-diacyl-sn-glycero-3-phosphate(out). Its function is as follows. Involved in the modulation of the mitochondrial apoptotic pathway by ensuring the accumulation of cardiolipin (CL) in mitochondrial membranes. In vitro, the TRIAP1:PRELID1 complex mediates the transfer of phosphatidic acid (PA) between liposomes and probably functions as a PA transporter across the mitochondrion intermembrane space to provide PA for CL synthesis in the inner membrane. Regulates the mitochondrial apoptotic pathway in primary Th cells. Regulates Th cell differentiation by down-regulating STAT6 thereby reducing IL-4-induced Th2 cell number. May be important for the development of vital and immunocompetent organs. This chain is PRELI domain-containing protein 1, mitochondrial (PRELID1), found in Bos taurus (Bovine).